Here is a 320-residue protein sequence, read N- to C-terminus: MHTKNLFYSRPQQITQYLSAFLMMVILTRTSISSAYPLFAQQGYENPREATGRIVCANCHLANKPVNIEVPQVILPDTVFEAVVQIPYDLQLKQVLSNGKKGGLNVGAVLILPEGFELAPPDRISPELKEKIGKLYFQSYRPNIKNIFVVGPVPGQKYKKITFPILSPNPATNRRAHFLKYPIYVGGNRGRGQIYPDGSKSNNTVFNATASGRVKKIIRNEKGGYEIIIKDGSDSNEVVNLLPPGLEPLVSEGDSIKLDQPLTSNPNVGGFGQDVAEVVLQDPSRVQVLLFFFASIILAQIFLVLKKKQFEKVQLTKINL.

Residues 1–35 form the signal peptide; sequence MHTKNLFYSRPQQITQYLSAFLMMVILTRTSISSA. 4 residues coordinate heme: tyrosine 36, cysteine 56, cysteine 59, and histidine 60. A helical membrane pass occupies residues 286-306; it reads VQVLLFFFASIILAQIFLVLK.

This sequence belongs to the cytochrome f family. In terms of assembly, the 4 large subunits of the cytochrome b6-f complex are cytochrome b6, subunit IV (17 kDa polypeptide, petD), cytochrome f and the Rieske protein, while the 4 small subunits are PetG, PetL, PetM and PetN. The complex functions as a dimer. Heme is required as a cofactor.

It is found in the plastid thylakoid membrane. In terms of biological role, component of the cytochrome b6-f complex, which mediates electron transfer between photosystem II (PSII) and photosystem I (PSI), cyclic electron flow around PSI, and state transitions. The protein is Cytochrome f of Cuscuta obtusiflora (Peruvian dodder).